We begin with the raw amino-acid sequence, 2353 residues long: Otogelin-like protein (2353 aa).

Positions 1–31 are cleaved as a signal peptide; it reads MNIVRKLNLMIPWSIFLLHVLLFSLQEYICA. The VWFD 1 domain maps to 121–297; that stretch reads GICKTWGQYH…VQTPDDTKCV (177 aa). 2 disulfide bridges follow: C123-C257 and C145-C296. N144 carries N-linked (GlcNAc...) asparagine glycosylation. The region spanning 390 to 443 is the TIL 1 domain; that stretch reads CDDSFVHRDCISCCPPTCTFEKQCLGSNLHCLDGCYCPDGLVMDNGTCISLENC. N-linked (GlcNAc...) asparagine glycosylation is found at N434 and N473. Residues 481–654 form the VWFD 2 domain; that stretch reads VQCSVVGDSH…NAWRVSSTCF (174 aa). 3 cysteine pairs are disulfide-bonded: C483–C618, C505–C653, and C527–C535. In terms of domain architecture, TIL 2 spans 745–800; the sequence is CQKGMLYHHCSSFCLHSCISLSSPEQCSDDCAEGCNCPEGKFYEDTLNFCVPIFHC. N-linked (GlcNAc...) asparagine glycans are attached at residues N826 and N876. The VWFD 3 domain occupies 946–1115; that stretch reads AVCTIYGDRH…SWALGQCESP (170 aa). Disulfide bonds link C948/C1078 and C992/C999. N1289, N1604, and N2198 each carry an N-linked (GlcNAc...) asparagine glycan. The VWFD 4 domain occupies 1534-1723; it reads CRCSMLSELS…SWEIEKSFEV (190 aa). C1536 and C1683 form a disulfide bridge. Intrachain disulfides connect C2261/C2317, C2282/C2331, C2293/C2348, and C2297/C2350. The region spanning 2261–2353 is the CTCK domain; that stretch reads CKREERICQK…EPIDCTCQWN (93 aa).

This sequence belongs to the otogelin family. Expressed at high levels in fetal inner ear and heart. Low levels in fetal skeletal muscle, kidney, spleen and colon. Not detected in fetal liver, lung, brain, nor in fetal stomach. In adult tissues, highest levels in brain, kidney, heart and retina. Relatively low levels in lung, spleen and duodenum. Not detected in adult skeletal muscle, liver, nor testis.

It localises to the secreted. This Homo sapiens (Human) protein is Otogelin-like protein (OTOGL).